The sequence spans 521 residues: UDP-N-acetylmuramate--L-alanine ligase (521 aa).

An ATP-binding site is contributed by 136 to 142 (GAHGKTT).

This sequence belongs to the MurCDEF family.

Its subcellular location is the cytoplasm. It carries out the reaction UDP-N-acetyl-alpha-D-muramate + L-alanine + ATP = UDP-N-acetyl-alpha-D-muramoyl-L-alanine + ADP + phosphate + H(+). It functions in the pathway cell wall biogenesis; peptidoglycan biosynthesis. In terms of biological role, cell wall formation. The protein is UDP-N-acetylmuramate--L-alanine ligase of Bifidobacterium adolescentis (strain ATCC 15703 / DSM 20083 / NCTC 11814 / E194a).